Consider the following 420-residue polypeptide: L-rhamnose isomerase (420 aa).

Residues His262, Asp294, and Asp296 each coordinate Mn(2+).

Belongs to the rhamnose isomerase family. Homotetramer. Mn(2+) is required as a cofactor.

It is found in the cytoplasm. The enzyme catalyses L-rhamnopyranose = L-rhamnulose. Its pathway is carbohydrate degradation; L-rhamnose degradation; glycerone phosphate from L-rhamnose: step 1/3. Its function is as follows. Catalyzes the interconversion of L-rhamnose and L-rhamnulose. This chain is L-rhamnose isomerase, found in Pectobacterium atrosepticum (strain SCRI 1043 / ATCC BAA-672) (Erwinia carotovora subsp. atroseptica).